Here is a 248-residue protein sequence, read N- to C-terminus: Flagellar L-ring protein (248 aa).

The signal sequence occupies residues 1–23 (MRHAFRHSVRTLGLLGLLPVLSA). Cys-24 carries the N-palmitoyl cysteine lipid modification. Cys-24 carries S-diacylglycerol cysteine lipidation.

It belongs to the FlgH family. In terms of assembly, the basal body constitutes a major portion of the flagellar organelle and consists of four rings (L,P,S, and M) mounted on a central rod.

It is found in the cell outer membrane. The protein localises to the bacterial flagellum basal body. In terms of biological role, assembles around the rod to form the L-ring and probably protects the motor/basal body from shearing forces during rotation. This chain is Flagellar L-ring protein, found in Gluconobacter oxydans (strain 621H) (Gluconobacter suboxydans).